Reading from the N-terminus, the 719-residue chain is Leucine-rich repeat and fibronectin type-III domain-containing protein 5 (719 aa).

The first 17 residues, 1-17, serve as a signal peptide directing secretion; sequence MEKFLFYLFLIGIAVRA. Positions 18–51 constitute an LRRNT domain; sequence QICPKRCVCQILSPNLATLCAKKGLLFVPPNIDR. At 18-529 the chain is on the extracellular side; the sequence is QICPKRCVCQ…MQSQFLGGTM (512 aa). LRR repeat units lie at residues 52 to 73, 76 to 97, 100 to 121, 124 to 145, 148 to 169, 172 to 193, and 196 to 217; these read RTVE…DFAN, SLVD…AFAD, NLRA…MFSG, NLHH…AFDD, ALEE…AVEK, SLHT…TFSH, and KMTR…PLFQ. N73 carries N-linked (GlcNAc...) asparagine glycosylation. The LRRCT domain maps to 240-286; sequence NPLHCNCELLWLRRLSREDDLETCASPALLTGRYFWSIPEEEFLCEP. The region spanning 287-373 is the Ig-like domain; the sequence is PLITRHTHEM…GEATQTVDLH (87 aa). A disulfide bridge connects residues C308 and C357. Residues N330, N339, N382, N406, and N452 are each glycosylated (N-linked (GlcNAc...) asparagine). The tract at residues 385–416 is disordered; the sequence is NHIHEPDPGSSDISTSTKSGSNASSSNGDTKM. Residues 393 to 412 show a composition bias toward low complexity; it reads GSSDISTSTKSGSNASSSNG. The 90-residue stretch at 414-503 folds into the Fibronectin type-III domain; it reads TKMSQDKIVV…ITSLTATRVV (90 aa). A helical transmembrane segment spans residues 530–550; that stretch reads IIIIGGIIVASVLVFIIILMI. The Cytoplasmic portion of the chain corresponds to 551–719; the sequence is RYKVCNNNGQ…VQETQRLESI (169 aa). A compositionally biased stretch (low complexity) spans 614–627; it reads SETCSSQDSSTTTS. The disordered stretch occupies residues 614 to 719; sequence SETCSSQDSS…VQETQRLESI (106 aa). 3 stretches are compositionally biased toward polar residues: residues 628-641, 654-677, and 702-713; these read ALPP…PVSQ, EPQS…TALQ, and LLTNVDQNVQET.

Belongs to the LRFN family. Can form heteromeric complexes with LRFN1, LRFN2, LRFN3 and LFRN4. Able to form homomeric complexes across cell junctions, between adjacent cells. Does not interact with DLG1, DLG2 or DLG3. Does not interact with DLG4. Post-translationally, glycosylated. In terms of tissue distribution, predominantly expressed in the brain, with a weak, but broad expression in the cerebral cortex and diencephalic nuclei. Strongly expressed in both the pyramidal layer and the dentate gyrus of the hippocampus. Also detected in other parts of the central nervous system, including the olfactory bulb, pons, cerebellum, and medulla oblongata, as well as in the peripheral nervous system, such as the ganglia of cranial nerves and the dorsal root ganglion during gestation.

The protein resides in the membrane. Functionally, cell adhesion molecule that mediates homophilic cell-cell adhesion in a Ca(2+)-independent manner. Promotes neurite outgrowth in hippocampal neurons. The polypeptide is Leucine-rich repeat and fibronectin type-III domain-containing protein 5 (Lrfn5) (Mus musculus (Mouse)).